Reading from the N-terminus, the 247-residue chain is 7-cyano-7-deazaguanine synthase (247 aa).

Residue F21–L31 coordinates ATP. 4 residues coordinate Zn(2+): C209, C224, C227, and C230.

Belongs to the QueC family. Requires Zn(2+) as cofactor.

It catalyses the reaction 7-carboxy-7-deazaguanine + NH4(+) + ATP = 7-cyano-7-deazaguanine + ADP + phosphate + H2O + H(+). It participates in purine metabolism; 7-cyano-7-deazaguanine biosynthesis. Functionally, catalyzes the ATP-dependent conversion of 7-carboxy-7-deazaguanine (CDG) to 7-cyano-7-deazaguanine (preQ(0)). The sequence is that of 7-cyano-7-deazaguanine synthase from Halorhodospira halophila (strain DSM 244 / SL1) (Ectothiorhodospira halophila (strain DSM 244 / SL1)).